Reading from the N-terminus, the 380-residue chain is Alpha-N-acetylneuraminate alpha-2,8-sialyltransferase ST8SIA3 (380 aa).

Topologically, residues 1-9 are cytoplasmic; that stretch reads MRNCKMARV. The helical; Signal-anchor for type II membrane protein transmembrane segment at 10-33 threads the bilayer; sequence ASVLGLVMLSVALLILSLISYVSL. At 34 to 380 the chain is on the lumenal side; sequence KKENIFTTPK…LTKLTLSHCA (347 aa). N-linked (GlcNAc...) asparagine glycosylation is found at N93, N113, and N160. 2 disulfides stabilise this stretch: C162–C313 and C176–C379. CMP-N-acetyl-beta-neuraminate-binding residues include N167 and N190. A glycan (N-linked (GlcNAc...) asparagine) is linked at N206. Positions 300, 301, 302, 322, 336, and 337 each coordinate CMP-N-acetyl-beta-neuraminate. H354 functions as the Proton donor/acceptor in the catalytic mechanism.

The protein belongs to the glycosyltransferase 29 family. Homodimer. Autopolysialylated. As to expression, expressed in fetal and adult brain and fetal liver.

The protein resides in the golgi apparatus membrane. The enzyme catalyses [N-acetyl-alpha-D-neuraminosyl-(2-&gt;8)](n) + CMP-N-acetyl-beta-neuraminate = [N-acetyl-alpha-D-neuraminosyl-(2-&gt;8)](n+1) + CMP + H(+). It carries out the reaction alpha-Neu5Ac-(2-&gt;3)-beta-D-Gal-(1-&gt;4)-6S-D-GlcNAc + CMP-N-acetyl-beta-neuraminate = alpha-Neu5Ac-(2-&gt;8)-alpha-Neu5Ac-(2-&gt;3)-beta-D-Gal-(1-&gt;4)-6S-D-GlcNAc + CMP + H(+). The catalysed reaction is a ganglioside GM3 (d18:1(4E)) + CMP-N-acetyl-beta-neuraminate = a ganglioside GD3 (d18:1(4E)) + CMP + H(+). It catalyses the reaction a ganglioside GM3 + CMP-N-acetyl-beta-neuraminate = a ganglioside GD3 + CMP + H(+). The enzyme catalyses an N-acetyl-alpha-neuraminyl-(2-&gt;3)-beta-D-galactosyl derivative + CMP-N-acetyl-beta-neuraminate = an N-acetyl-alpha-neuraminyl-(2-&gt;8)-N-acetyl-alpha-neuraminyl-(2-&gt;3)-beta-D-galactosyl derivative + CMP + H(+). It carries out the reaction an N-acetyl-alpha-neuraminyl-(2-&gt;3)-beta-D-galactosyl-(1-&gt;4)-N-acetyl-beta-D-glucosaminyl derivative + CMP-N-acetyl-beta-neuraminate = an alpha-Neu5Ac-(2-&gt;8)-alpha-Neu5Ac-(2-&gt;3)-beta-D-Gal-(1-&gt;4)-beta-D-GlcNAc derivative + CMP + H(+). Its pathway is protein modification; protein glycosylation. Its function is as follows. Catalyzes the transfer of sialic acid from a CMP-linked sialic acid donor onto a terminal alpha-2,3-, alpha-2,6-, or alpha-2,8-linked sialic acid of an acceptor, such as N-linked oligosaccharides of glycoproteins and glycolipids through alpha-2,8-linkages. Forms oligosialic and polysialic acid on various sialylated N-acetyllactosamine oligosaccharides of glycoproteins, including FETUB N-glycans, a2-HS-glycoprotein (AHSG) and alpha 2,3-sialylated glycosphingolipids, such as alpha 2,3-sialylparagloboside and ganglioside GM3 and to a lesser extent NCAM1 N-glycans. However, it is much more specific to N-linked oligosaccharides of glycoproteins than glycosphingolipids. 2,3-sialylparagloboside serves as the best acceptor substrate among the glycolipids. alpha-Neu5Ac-(2-&gt;8)-alpha-Neu5Ac-(2-&gt;3)-beta-D-Gal-(1-&gt;4)-6S-D-GlcNAc and monosialyl and disialyl N-acetyllactosamines are the best acceptor substrates among glycoproteins. May plays critical role in the striatum by mediating the formation of disialylated and trisialylated terminal glycotopes on N- and O-glycans of specific striatal proteins, regulating their distribution in lipid rafts, affecting their interaction with other binding partners, and subsequently modulating striatal functions. This is Alpha-N-acetylneuraminate alpha-2,8-sialyltransferase ST8SIA3 from Homo sapiens (Human).